A 111-amino-acid chain; its full sequence is uncharacterized protein (111 aa).

The stretch at 4-51 (LGQVKVLEEKVAKAVHLVQMLKEENAALRAEIDGRGKRITELEQLVLX) forms a coiled coil.

This is an uncharacterized protein from Treponema pallidum (strain Nichols).